The sequence spans 136 residues: Ribosome-binding factor A (136 aa).

This sequence belongs to the RbfA family. As to quaternary structure, monomer. Binds 30S ribosomal subunits, but not 50S ribosomal subunits or 70S ribosomes.

It is found in the cytoplasm. Functionally, one of several proteins that assist in the late maturation steps of the functional core of the 30S ribosomal subunit. Associates with free 30S ribosomal subunits (but not with 30S subunits that are part of 70S ribosomes or polysomes). Required for efficient processing of 16S rRNA. May interact with the 5'-terminal helix region of 16S rRNA. This chain is Ribosome-binding factor A, found in Cellvibrio japonicus (strain Ueda107) (Pseudomonas fluorescens subsp. cellulosa).